The primary structure comprises 202 residues: Hydrogenase expression/formation protein HupD (202 aa).

Residues E28, D74, and H105 each coordinate Ni(2+).

The protein belongs to the peptidase A31 family.

Functionally, not known. Could be involved in the processing of hydrogenase. The sequence is that of Hydrogenase expression/formation protein HupD (hupD) from Rhizobium leguminosarum bv. viciae.